We begin with the raw amino-acid sequence, 449 residues long: UDP-N-acetylmuramoylalanine--D-glutamate ligase (449 aa).

117–123 (GSNGKTT) is an ATP binding site.

The protein belongs to the MurCDEF family.

The protein resides in the cytoplasm. It catalyses the reaction UDP-N-acetyl-alpha-D-muramoyl-L-alanine + D-glutamate + ATP = UDP-N-acetyl-alpha-D-muramoyl-L-alanyl-D-glutamate + ADP + phosphate + H(+). It functions in the pathway cell wall biogenesis; peptidoglycan biosynthesis. In terms of biological role, cell wall formation. Catalyzes the addition of glutamate to the nucleotide precursor UDP-N-acetylmuramoyl-L-alanine (UMA). In Exiguobacterium sibiricum (strain DSM 17290 / CCUG 55495 / CIP 109462 / JCM 13490 / 255-15), this protein is UDP-N-acetylmuramoylalanine--D-glutamate ligase.